We begin with the raw amino-acid sequence, 373 residues long: Nuclear hormone receptor family member nhr-69 (373 aa).

A DNA-binding region (nuclear receptor) is located at residues 3–78; the sequence is EEICHICNDK…AGMKSNAIQN (76 aa). 2 consecutive NR C4-type zinc fingers follow at residues 6 to 26 and 42 to 66; these read CHICNDKSTGKHYGAISCDGC and CRFEQNCDVTKNKRNACRACRLQKC. Residues 93 to 344 enclose the NR LBD domain; the sequence is EKEDLIDQLV…SLMEELILND (252 aa).

This sequence belongs to the nuclear hormone receptor family. In terms of assembly, interacts with R-SMAD daf-8. As to expression, expressed in the ASI neurons, hypodermis, and in tail neurons.

The protein resides in the nucleus. Its function is as follows. Orphan nuclear receptor which, in cooperation with R-SMAD daf-8, modulates the Insulin/IGF-1-like signaling (IIS) pathway, perhaps by regulating expression of the potassium channel exp-2, which in turn modulates the secretion of insulin-like peptide daf-28. This chain is Nuclear hormone receptor family member nhr-69 (nhr-69), found in Caenorhabditis elegans.